Reading from the N-terminus, the 733-residue chain is Protein OBERON 3 (733 aa).

Basic and acidic residues predominate over residues 1 to 15 (MIGEKDLAGDGECSR). Disordered stretches follow at residues 1-42 (MIGE…YHQK) and 118-142 (NPNS…KKSN). Over residues 21 to 30 (PRFSNLNNQT) the composition is skewed to polar residues. Residues 120 to 153 (NSSKRKAHEEEEEAEEEEDKKSNKIETLNLSLAL) are a coiled coil. The PHD-type zinc-finger motif lies at 436 to 500 (SCMCPVCLRF…MFHCIGCAHK (65 aa)). The tract at residues 592-614 (VAAETSYRKDEASVTPSTSKDQK) is disordered. Residues 644-733 (MFQKKADEAR…RMEVTRQQLV (90 aa)) are a coiled coil.

In terms of assembly, self-interacts. Interacts with OBE1 and OBE2. Interacts with OBE4.

It is found in the nucleus. In terms of biological role, probable transcription factor that functions redundantly with OBE4 in specification of the hypophysis and establishment of the embryonic root. Involved in the activation of ARF5/MP-dependent gene expression during embryonic root meristem initiation. Involved in shoot meristem homeostasis. The chain is Protein OBERON 3 from Arabidopsis thaliana (Mouse-ear cress).